Reading from the N-terminus, the 176-residue chain is ATP-dependent protease subunit HslV (176 aa).

Threonine 5 is an active-site residue. The Na(+) site is built by serine 161, cysteine 164, and threonine 167.

Belongs to the peptidase T1B family. HslV subfamily. A double ring-shaped homohexamer of HslV is capped on each side by a ring-shaped HslU homohexamer. The assembly of the HslU/HslV complex is dependent on binding of ATP.

It is found in the cytoplasm. The enzyme catalyses ATP-dependent cleavage of peptide bonds with broad specificity.. Allosterically activated by HslU binding. Protease subunit of a proteasome-like degradation complex believed to be a general protein degrading machinery. In Desulfitobacterium hafniense (strain DSM 10664 / DCB-2), this protein is ATP-dependent protease subunit HslV.